Here is a 234-residue protein sequence, read N- to C-terminus: MIELWPAIDLIGSTSVRLTEGKYDSEEKMSRSAEESIAYYSQFECVNRIHIVDLIGAKAQHAREFDYIKSLRRLTTKDIEVGGGIRTKSQIMDYFAAGINYCIVGTKGIQDTDWLKEMAHTFPGRIYFSVDAYGEDIKVNGWEEDTELNLFSFVKQLSDIPLGGIIYTHIAKDGKMSGPNFELTGQLVKATTIPVIASGGIRHQQDIQRLASLNVHAAIIGKAAHQASFWEGLK.

D9 serves as the catalytic Proton acceptor. Residue D131 is the Proton donor of the active site.

The protein belongs to the HisA/HisF family.

The protein localises to the cytoplasm. The enzyme catalyses 1-(5-phospho-beta-D-ribosyl)-5-[(5-phospho-beta-D-ribosylamino)methylideneamino]imidazole-4-carboxamide = 5-[(5-phospho-1-deoxy-D-ribulos-1-ylimino)methylamino]-1-(5-phospho-beta-D-ribosyl)imidazole-4-carboxamide. The protein operates within amino-acid biosynthesis; L-histidine biosynthesis; L-histidine from 5-phospho-alpha-D-ribose 1-diphosphate: step 4/9. This Staphylococcus aureus (strain bovine RF122 / ET3-1) protein is 1-(5-phosphoribosyl)-5-[(5-phosphoribosylamino)methylideneamino] imidazole-4-carboxamide isomerase.